The primary structure comprises 275 residues: Vitamin B12-binding protein (275 aa).

An N-terminal signal peptide occupies residues 1–19 (MMNKLCFALPLIFSDASFA). Residues 25–272 (RIISLAPHST…EVCEHFETVR (248 aa)) enclose the Fe/B12 periplasmic-binding domain. An intrachain disulfide couples Cys-185 to Cys-265.

The protein belongs to the BtuF family. The complex is composed of two ATP-binding proteins (BtuD), two transmembrane proteins (BtuC) and a solute-binding protein (BtuF).

Its subcellular location is the periplasm. Part of the ABC transporter complex BtuCDF involved in vitamin B12 import. Binds vitamin B12 and delivers it to the periplasmic surface of BtuC. This is Vitamin B12-binding protein from Vibrio campbellii (strain ATCC BAA-1116).